Consider the following 435-residue polypeptide: Glutamate-1-semialdehyde 2,1-aminomutase (435 aa).

The residue at position 266 (Lys-266) is an N6-(pyridoxal phosphate)lysine.

The protein belongs to the class-III pyridoxal-phosphate-dependent aminotransferase family. HemL subfamily. In terms of assembly, homodimer. Requires pyridoxal 5'-phosphate as cofactor.

Its subcellular location is the cytoplasm. It carries out the reaction (S)-4-amino-5-oxopentanoate = 5-aminolevulinate. Its pathway is porphyrin-containing compound metabolism; protoporphyrin-IX biosynthesis; 5-aminolevulinate from L-glutamyl-tRNA(Glu): step 2/2. The sequence is that of Glutamate-1-semialdehyde 2,1-aminomutase from Coxiella burnetii (strain RSA 331 / Henzerling II).